The sequence spans 132 residues: MFFNFLIPPNSFSSFPEYVAFVVSLSYALNATLLLLYSRIFGVEVKEKAFIPVTLSFVAIDFTSIQGLRLFVGIPAYLGVVILTSLCILEGLALALTSSLALVNASRRHLAATWIAANVASSGLFMAFVGVS.

The next 4 helical transmembrane spans lie at 15–37 (FPEY…LLLY), 49–71 (AFIP…LRLF), 81–103 (VILT…LALV), and 110–129 (LAAT…MAFV).

The protein localises to the cell membrane. This is an uncharacterized protein from Archaeoglobus fulgidus (strain ATCC 49558 / DSM 4304 / JCM 9628 / NBRC 100126 / VC-16).